The sequence spans 358 residues: Methylthioribose-1-phosphate isomerase (358 aa).

Substrate is bound by residues 54 to 56 (RGA), Arg-96, and Gln-205. Asp-246 serves as the catalytic Proton donor. 256 to 257 (NK) contacts substrate.

It belongs to the eIF-2B alpha/beta/delta subunits family. MtnA subfamily.

The catalysed reaction is 5-(methylsulfanyl)-alpha-D-ribose 1-phosphate = 5-(methylsulfanyl)-D-ribulose 1-phosphate. Its pathway is amino-acid biosynthesis; L-methionine biosynthesis via salvage pathway; L-methionine from S-methyl-5-thio-alpha-D-ribose 1-phosphate: step 1/6. Its function is as follows. Catalyzes the interconversion of methylthioribose-1-phosphate (MTR-1-P) into methylthioribulose-1-phosphate (MTRu-1-P). In Pseudomonas syringae pv. tomato (strain ATCC BAA-871 / DC3000), this protein is Methylthioribose-1-phosphate isomerase.